The primary structure comprises 431 residues: STE20-related kinase adapter protein alpha (431 aa).

Residues S2 and S46 each carry the phosphoserine modification. Disordered regions lie at residues 32–52 and 314–344; these read EQPP…SIAS and PSRS…SHPY. Positions 69 to 379 constitute a Protein kinase domain; sequence YELLTIIGKG…ASTLLNHSFF (311 aa). T419 is subject to Phosphothreonine; by LKB1.

The protein belongs to the protein kinase superfamily. STE Ser/Thr protein kinase family. STE20 subfamily. As to quaternary structure, component of a trimeric complex composed of STK11/LKB1, STRAD (STRADA or STRADB) and CAB39/MO25 (CAB39/MO25alpha or CAB39L/MO25beta): the complex tethers STK11/LKB1 in the cytoplasm and stimulates its catalytic activity.

It localises to the nucleus. It is found in the cytoplasm. Pseudokinase which, in complex with CAB39/MO25 (CAB39/MO25alpha or CAB39L/MO25beta), binds to and activates STK11/LKB1. Adopts a closed conformation typical of active protein kinases and binds STK11/LKB1 as a pseudosubstrate, promoting conformational change of STK11/LKB1 in an active conformation. The polypeptide is STE20-related kinase adapter protein alpha (Strada) (Mus musculus (Mouse)).